The sequence spans 425 residues: uncharacterized protein (425 aa).

The segment at 135–202 adopts a CHY-type zinc-finger fold; it reads KEQEILGCSH…AAQYCKYCKN (68 aa). C142, H144, C153, C156, C162, C165, H166, H172, C184, C187, C197, C200, C209, C212, H225, C226, C229, C232, H244, C245, C248, C251, H260, and C262 together coordinate Zn(2+). A CTCHY-type zinc finger spans residues 204–270; that stretch reads MGRYYCNKCK…RCIERSTDCN (67 aa). The segment at 271–313 adopts an RING-type; atypical zinc-finger fold; that stretch reads CPICGEYMFNSRERVIFLSCSHPLHQRCHEEYIRTNYRCPTCY.

This is an uncharacterized protein from Schizosaccharomyces pombe (strain 972 / ATCC 24843) (Fission yeast).